Consider the following 149-residue polypeptide: Calmodulin (149 aa).

Ala2 carries the N-acetylalanine modification. 4 EF-hand domains span residues 8 to 43, 44 to 79, 81 to 116, and 117 to 149; these read EQIA…LGQN, PTEA…KMKD, DSEE…LGEK, and LTDE…MMAK. 14 residues coordinate Ca(2+): Asp21, Asp23, Asp25, Cys27, Glu32, Asp57, Asp59, Asn61, Thr63, Glu68, Asp94, Asp96, Asn98, and Glu105. Lys116 carries the N6,N6,N6-trimethyllysine modification. Residues Asp130, Asp132, Asp134, Gln136, and Glu141 each contribute to the Ca(2+) site.

Belongs to the calmodulin family.

Its function is as follows. Calmodulin mediates the control of a large number of enzymes, ion channels and other proteins by Ca(2+). Among the enzymes to be stimulated by the calmodulin-Ca(2+) complex are a number of protein kinases and phosphatases. The sequence is that of Calmodulin (CALM1) from Zea mays (Maize).